The primary structure comprises 473 residues: Isocitrate dehydrogenase [NADP] (473 aa).

Residue Thr104 coordinates NADP(+). Residues Ser113, Asn115, Arg119, Arg129, and Arg153 each coordinate D-threo-isocitrate. Asp362 lines the Mg(2+) pocket. NADP(+) contacts are provided by residues 394–400 (HGTAPKH), Asn407, Tyr446, and Arg450.

Belongs to the isocitrate and isopropylmalate dehydrogenases family. In terms of assembly, homodimer. Mg(2+) serves as cofactor. The cofactor is Mn(2+).

The catalysed reaction is D-threo-isocitrate + NADP(+) = 2-oxoglutarate + CO2 + NADPH. Its activity is regulated as follows. Inhibited by either oxaloacetate or glyoxylate. Also inhibited by the adenine nucleotides AMP, ADP and ATP and by NADPH, which inhibits the activity by 28% when it is added to the assay mixture at 0.25 mM. Catalyzes the oxidative decarboxylation of isocitrate to 2-oxoglutarate and carbon dioxide with the concomitant reduction of NADP(+). The chain is Isocitrate dehydrogenase [NADP] from Nostoc sp. (strain PCC 7120 / SAG 25.82 / UTEX 2576).